A 252-amino-acid polypeptide reads, in one-letter code: MGAEAVRVLVVDDSPVDRRVVELLLRAHCGGGGGAAAGEAAPFHVTAVDSGKKAMELLGRRRGDRDHLTPSSPAAAAAANDQAIDIVLTDYCMPEMTGYDLLKAIKALGSPNPIPVVVMSSENEPQRISRCLTAGAEDFILKPLKMNDVQRLRKCSGATRPKSAVAGDDDRCCNTAKKAAAAAAATPEQQQQQQRSSHLAGLAMVMNASSFEVSHYFQLIFKLILLAYAVLCLSQLLHRWSNGSSLLSLWCA.

A Response regulatory domain is found at 7-157 (RVLVVDDSPV…DVQRLRKCSG (151 aa)). D90 is modified (4-aspartylphosphate).

The protein belongs to the ARR family. Type-A subfamily. In terms of processing, two-component system major event consists of a His-to-Asp phosphorelay between a sensor histidine kinase (HK) and a response regulator (RR). In plants, the His-to-Asp phosphorelay involves an additional intermediate named Histidine-containing phosphotransfer protein (HPt). This multistep phosphorelay consists of a His-Asp-His-Asp sequential transfer of a phosphate group between first a His and an Asp of the HK protein, followed by the transfer to a conserved His of the HPt protein and finally the transfer to an Asp in the receiver domain of the RR protein. In terms of tissue distribution, expressed in mature leaves and flowers, and at low levels in roots and shoots.

Functions as a response regulator involved in His-to-Asp phosphorelay signal transduction system. Phosphorylation of the Asp residue in the receiver domain activates the ability of the protein to promote the transcription of target genes. Type-A response regulators seem to act as negative regulators of the cytokinin signaling. This Oryza sativa subsp. indica (Rice) protein is Two-component response regulator ORR2.